Consider the following 347-residue polypeptide: uncharacterized protein (347 aa).

10 helical membrane-spanning segments follow: residues 6–26 (GSASQLAFVYVGTVVGAGFAT), 37–57 (FGWFGFFGILVSGGMFTLLGA), 90–110 (FMLFVLLGVTSVMLSGAGALF), 114–134 (LGMSAQIGMLITIGLSLIVMT), 140–160 (IFGVNVFVVPLLIIFSMIVVA), 182–202 (WLLSAVSYGALNLSLAQAVLV), 217–237 (GALIGGTMLTIVLSASFLSLS), 262–282 (LIYLLIIFGEVFTSVIGNLYG), 289–309 (SFLPVKSKYIFAAIMITAYIT), and 317–337 (LISTIYPLFGYVSLAFIGALL).

It localises to the cell membrane. This is an uncharacterized protein from Bacillus subtilis (strain 168).